Here is a 626-residue protein sequence, read N- to C-terminus: Endogenous retrovirus group S71 member 1 Env polyprotein (626 aa).

The signal sequence occupies residues 1–38 (MGPEAWVRPLKTAPKPGEAIRLILFIYLSCFFLPVMSS). A surface protein region spans residues 39–438 (EPSYSFLLTS…PPELHPRLHQ (400 aa)). Residues 39–575 (EPSYSFLLTS…FNWNPWLTTL (537 aa)) are Extracellular-facing. The CXXC motif lies at 302 to 305 (CWLC). Residues 439–459 (AVPLLVPLLAGLSIAGSAAIG) are fusion peptide. A transmembrane protein region spans residues 439-626 (AVPLLVPLLA…KTQYDTLVNN (188 aa)). The short motif at 503 to 519 (LQNCRCLDLLFLSQGGL) is the CKS-17 element. C520 and C527 are disulfide-bonded. The short motif at 520-528 (CAALGESCC) is the CX6CC element. The helical transmembrane segment at 576–596 (ITGLAGPLLILLLSLIFGPCI) threads the bilayer. Topologically, residues 597–626 (LNSFLNFIKQRIASVKLTYLKTQYDTLVNN) are cytoplasmic.

The protein belongs to the gamma type-C retroviral envelope protein family. HERV class-I T env subfamily. Post-translationally, the CXXC motif is highly conserved across a broad range of retroviral envelope proteins. It is thought to participate in the formation of a labile disulfide bond possibly with the CX6CC motif present in the transmembrane domain. As to expression, expressed at higher level in thyroid. Expressed at lower level in adrenal, bone marrow, brain, breast, kidney, ovary, placenta, prostate, skin, testis and trachea.

Its subcellular location is the cell membrane. In terms of biological role, retroviral envelope proteins mediate receptor recognition and membrane fusion during early infection. Endogenous envelope proteins may have kept, lost or modified their original function during evolution. This endogenous envelope protein has lost its original fusogenic properties. This chain is Endogenous retrovirus group S71 member 1 Env polyprotein (ERVS71-1), found in Homo sapiens (Human).